A 282-amino-acid polypeptide reads, in one-letter code: Small ribosomal subunit protein uS3 (282 aa).

The region spanning 43–111 (IRRLMSKGME…QVQLNILEVK (69 aa)) is the KH type-2 domain. Residues 217–282 (AQSQAAAPRA…IGKGSNGTEA (66 aa)) form a disordered region. Residues 228 to 240 (RRNERGDRPDRGA) are compositionally biased toward basic and acidic residues. Residues 256–269 (AVATGSAPTGTAAT) are compositionally biased toward low complexity.

Belongs to the universal ribosomal protein uS3 family. In terms of assembly, part of the 30S ribosomal subunit. Forms a tight complex with proteins S10 and S14.

Binds the lower part of the 30S subunit head. Binds mRNA in the 70S ribosome, positioning it for translation. This is Small ribosomal subunit protein uS3 from Kineococcus radiotolerans (strain ATCC BAA-149 / DSM 14245 / SRS30216).